The chain runs to 1342 residues: DNA-directed RNA polymerase subunit beta (1342 aa).

Belongs to the RNA polymerase beta chain family. As to quaternary structure, the RNAP catalytic core consists of 2 alpha, 1 beta, 1 beta' and 1 omega subunit. When a sigma factor is associated with the core the holoenzyme is formed, which can initiate transcription.

It carries out the reaction RNA(n) + a ribonucleoside 5'-triphosphate = RNA(n+1) + diphosphate. In terms of biological role, DNA-dependent RNA polymerase catalyzes the transcription of DNA into RNA using the four ribonucleoside triphosphates as substrates. The protein is DNA-directed RNA polymerase subunit beta of Enterobacter sp. (strain 638).